The following is a 464-amino-acid chain: 3-isopropylmalate dehydratase large subunit (464 aa).

Positions 337, 397, and 400 each coordinate [4Fe-4S] cluster.

Belongs to the aconitase/IPM isomerase family. LeuC type 1 subfamily. Heterodimer of LeuC and LeuD. Requires [4Fe-4S] cluster as cofactor.

The enzyme catalyses (2R,3S)-3-isopropylmalate = (2S)-2-isopropylmalate. Its pathway is amino-acid biosynthesis; L-leucine biosynthesis; L-leucine from 3-methyl-2-oxobutanoate: step 2/4. Functionally, catalyzes the isomerization between 2-isopropylmalate and 3-isopropylmalate, via the formation of 2-isopropylmaleate. This is 3-isopropylmalate dehydratase large subunit from Bacillus cereus (strain ZK / E33L).